Reading from the N-terminus, the 184-residue chain is Photosystem I assembly protein Ycf4 (184 aa).

The next 2 helical transmembrane spans lie at 22-42 and 57-77; these read FCWA…GISS and IVFF…LFIS.

This sequence belongs to the Ycf4 family.

The protein localises to the plastid. It localises to the chloroplast thylakoid membrane. Seems to be required for the assembly of the photosystem I complex. The protein is Photosystem I assembly protein Ycf4 of Coffea arabica (Arabian coffee).